The following is a 214-amino-acid chain: Mexicain (214 aa).

3 disulfide bridges follow: cysteine 22–cysteine 63, cysteine 56–cysteine 95, and cysteine 153–cysteine 200. The active site involves cysteine 25. Residue cysteine 25 coordinates E64. Active-site residues include histidine 159 and asparagine 175.

This sequence belongs to the peptidase C1 family. Expressed in latex.

It is found in the secreted. Functionally, cysteine protease. This chain is Mexicain, found in Jacaratia mexicana (Wild papaya).